The chain runs to 83 residues: Cytochrome b559 subunit alpha (83 aa).

The chain crosses the membrane as a helical span at residues 21–35 (VIHSITIPSLFIAGW). Histidine 23 contributes to the heme binding site.

This sequence belongs to the PsbE/PsbF family. Heterodimer of an alpha subunit and a beta subunit. PSII is composed of 1 copy each of membrane proteins PsbA, PsbB, PsbC, PsbD, PsbE, PsbF, PsbH, PsbI, PsbJ, PsbK, PsbL, PsbM, PsbT, PsbX, PsbY, PsbZ, Psb30/Ycf12, at least 3 peripheral proteins of the oxygen-evolving complex and a large number of cofactors. It forms dimeric complexes. Heme b is required as a cofactor.

Its subcellular location is the plastid. The protein resides in the chloroplast thylakoid membrane. This b-type cytochrome is tightly associated with the reaction center of photosystem II (PSII). PSII is a light-driven water:plastoquinone oxidoreductase that uses light energy to abstract electrons from H(2)O, generating O(2) and a proton gradient subsequently used for ATP formation. It consists of a core antenna complex that captures photons, and an electron transfer chain that converts photonic excitation into a charge separation. This is Cytochrome b559 subunit alpha from Mesembryanthemum crystallinum (Common ice plant).